The sequence spans 242 residues: NAD(P)H-hydrate epimerase (242 aa).

The YjeF N-terminal domain maps to 11–221; the sequence is AKALDAELMS…KVITKKFNLS (211 aa). Residue 61–65 participates in (6S)-NADPHX binding; sequence NNGGD. K(+) contacts are provided by Asn62 and Asp128. Residues 132–138 and Asp161 each bind (6S)-NADPHX; that span reads GFSFKGP. A K(+)-binding site is contributed by Ser164.

Belongs to the NnrE/AIBP family. The cofactor is K(+).

It is found in the cytoplasm. Its subcellular location is the mitochondrion. It localises to the nucleus. The enzyme catalyses (6R)-NADHX = (6S)-NADHX. The catalysed reaction is (6R)-NADPHX = (6S)-NADPHX. Its function is as follows. Catalyzes the epimerization of the S- and R-forms of NAD(P)HX, a damaged form of NAD(P)H that is a result of enzymatic or heat-dependent hydration. This is a prerequisite for the S-specific NAD(P)H-hydrate dehydratase to allow the repair of both epimers of NAD(P)HX. May have a role in meiosis. This Schizosaccharomyces pombe (strain 972 / ATCC 24843) (Fission yeast) protein is NAD(P)H-hydrate epimerase (mug182).